Consider the following 327-residue polypeptide: Aliphatic sulfonates import ATP-binding protein SsuB (327 aa).

Residues 21–54 (ELAQPRIADGDAQDAAVYERDGGAHAPPDGDRAD) are disordered. Residues 37 to 54 (VYERDGGAHAPPDGDRAD) show a composition bias toward basic and acidic residues. Residues 66–285 (VRLTRVSKRY…ARASAAFAAL (220 aa)) form the ABC transporter domain. Residue 98 to 105 (GRSGCGKS) coordinates ATP. Residues 300–327 (APAAPNAAGPEGASRGRAAPASGLRWAV) form a disordered region.

The protein belongs to the ABC transporter superfamily. Aliphatic sulfonates importer (TC 3.A.1.17.2) family. The complex is composed of two ATP-binding proteins (SsuB), two transmembrane proteins (SsuC) and a solute-binding protein (SsuA).

Its subcellular location is the cell inner membrane. It carries out the reaction ATP + H2O + aliphatic sulfonate-[sulfonate-binding protein]Side 1 = ADP + phosphate + aliphatic sulfonateSide 2 + [sulfonate-binding protein]Side 1.. Functionally, part of the ABC transporter complex SsuABC involved in aliphatic sulfonates import. Responsible for energy coupling to the transport system. This is Aliphatic sulfonates import ATP-binding protein SsuB from Burkholderia pseudomallei (strain K96243).